Here is an 82-residue protein sequence, read N- to C-terminus: Omega-conotoxin-like Am6.2 (82 aa).

The signal sequence occupies residues 1–22 (MKLTCMMIVAVLFLTAWTFVTA). Residues 23 to 52 (VPHSSNVLENLYLKARHEMENQEASKLNMR) constitute a propeptide that is removed on maturation. Disulfide bonds link Cys-56/Cys-73, Cys-63/Cys-77, and Cys-72/Cys-81. Residue Trp-76 is modified to 6'-bromotryptophan; partial; in Am6.2b (major form).

Belongs to the conotoxin O1 family. Mostly non-hydroxylated. Post-translationally, two forms of this peptides have been described. Am6.2a (Am3136) is not unmodified, while Am6.2b (Am3214) is Trp-76 brominated. Both forms are found in venom with a much more abundant brominated form. As to expression, expressed by the venom duct.

It localises to the secreted. Its function is as follows. Omega-conotoxins act at presynaptic membranes, they bind and block voltage-gated calcium channels (Cav). This is Omega-conotoxin-like Am6.2 from Conus amadis (Amadis cone).